The primary structure comprises 458 residues: Argininosuccinate lyase (458 aa).

The protein belongs to the lyase 1 family. Argininosuccinate lyase subfamily.

It localises to the cytoplasm. The enzyme catalyses 2-(N(omega)-L-arginino)succinate = fumarate + L-arginine. It functions in the pathway amino-acid biosynthesis; L-arginine biosynthesis; L-arginine from L-ornithine and carbamoyl phosphate: step 3/3. In Anoxybacillus flavithermus (strain DSM 21510 / WK1), this protein is Argininosuccinate lyase.